The primary structure comprises 370 residues: Histidinol-phosphate aminotransferase 2 (370 aa).

Position 230 is an N6-(pyridoxal phosphate)lysine (Lys-230).

Belongs to the class-II pyridoxal-phosphate-dependent aminotransferase family. Histidinol-phosphate aminotransferase subfamily. Homodimer. The cofactor is pyridoxal 5'-phosphate.

The enzyme catalyses L-histidinol phosphate + 2-oxoglutarate = 3-(imidazol-4-yl)-2-oxopropyl phosphate + L-glutamate. Its pathway is amino-acid biosynthesis; L-histidine biosynthesis; L-histidine from 5-phospho-alpha-D-ribose 1-diphosphate: step 7/9. The chain is Histidinol-phosphate aminotransferase 2 from Pseudomonas fluorescens (strain ATCC BAA-477 / NRRL B-23932 / Pf-5).